Consider the following 318-residue polypeptide: Transaldolase (318 aa).

The active-site Schiff-base intermediate with substrate is the lysine 132.

This sequence belongs to the transaldolase family. Type 1 subfamily. In terms of assembly, homodimer.

Its subcellular location is the cytoplasm. The enzyme catalyses D-sedoheptulose 7-phosphate + D-glyceraldehyde 3-phosphate = D-erythrose 4-phosphate + beta-D-fructose 6-phosphate. Its pathway is carbohydrate degradation; pentose phosphate pathway; D-glyceraldehyde 3-phosphate and beta-D-fructose 6-phosphate from D-ribose 5-phosphate and D-xylulose 5-phosphate (non-oxidative stage): step 2/3. In terms of biological role, transaldolase is important for the balance of metabolites in the pentose-phosphate pathway. The chain is Transaldolase from Shewanella sp. (strain MR-7).